The chain runs to 420 residues: MVENSYVLFARLCVELFHELPPLPSDESHGDITTFERLFLRKCRIELENASPKTEHLPLVYVDETNYYRFIKTVRVLAEVYKNSKITETTRKSMIQVLMNPILPPERITDAMNLFRSIIGKLADFHFSDEKFNQLVRSSRVVELEGNYNEEVKLRKEAEDALAMKKEDVEMMEQLLESYKEEQGKLQLQAKALEHKLEAELRHRKETETLLAIERDRIEKVKIQLETVENEIDNTRLKAEEFERKYEGEMILRRESEIALEKEKKELEEVKLKLETYEREQENLSSEVRTWQDKYEQESSLRKLSEYALSREQEELQIVKGLLEFYNGEADAMREERDKALKTAKEQMEKRQPPSSFFCPITQEVMKDPHFAADGFTYEAESIRKWLSTGHQTSPMTNLRLSHLTLVPNRALRSAIEELV.

The MIF4G domain maps to 4–168 (NSYVLFARLC…EDALAMKKED (165 aa)). The stretch at 139–352 (SRVVELEGNY…TAKEQMEKRQ (214 aa)) forms a coiled coil. Positions 352–420 (QPPSSFFCPI…ALRSAIEELV (69 aa)) constitute a U-box domain.

It carries out the reaction S-ubiquitinyl-[E2 ubiquitin-conjugating enzyme]-L-cysteine + [acceptor protein]-L-lysine = [E2 ubiquitin-conjugating enzyme]-L-cysteine + N(6)-ubiquitinyl-[acceptor protein]-L-lysine.. The protein operates within protein modification; protein ubiquitination. In terms of biological role, functions as an E3 ubiquitin ligase. The sequence is that of Putative U-box domain-containing protein 58 (PUB58) from Arabidopsis thaliana (Mouse-ear cress).